The chain runs to 128 residues: uncharacterized protein (128 aa).

Residues 2–127 (KLLQIRLLVN…DHNLIEIYKM (126 aa)) form the VOC domain. Residues Glu48 and Glu123 each coordinate Ni(2+).

Belongs to the glyoxalase I family.

This is an uncharacterized protein from Bacillus subtilis (strain 168).